A 176-amino-acid polypeptide reads, in one-letter code: Isopentenyl-diphosphate Delta-isomerase (176 aa).

Residues His-22 and His-28 each coordinate Mn(2+). The Nudix hydrolase domain maps to Leu-26–Ile-160. Residue Cys-62 is part of the active site. Position 64 (His-64) interacts with Mn(2+). Residue Glu-82 coordinates Mg(2+). The Mn(2+) site is built by Glu-108 and Glu-110. The active site involves Glu-110.

It belongs to the IPP isomerase type 1 family. It depends on Mg(2+) as a cofactor. The cofactor is Mn(2+).

Its subcellular location is the cytoplasm. The catalysed reaction is isopentenyl diphosphate = dimethylallyl diphosphate. The protein operates within isoprenoid biosynthesis; dimethylallyl diphosphate biosynthesis; dimethylallyl diphosphate from isopentenyl diphosphate: step 1/1. It functions in the pathway porphyrin-containing compound metabolism; chlorophyll biosynthesis. Catalyzes the 1,3-allylic rearrangement of the homoallylic substrate isopentenyl (IPP) to its highly electrophilic allylic isomer, dimethylallyl diphosphate (DMAPP). This chain is Isopentenyl-diphosphate Delta-isomerase, found in Roseobacter denitrificans (strain ATCC 33942 / OCh 114) (Erythrobacter sp. (strain OCh 114)).